Here is a 300-residue protein sequence, read N- to C-terminus: Inositol polyphosphate multikinase beta (300 aa).

Serine 78 bears the Phosphoserine mark.

The protein belongs to the inositol phosphokinase (IPK) family. In terms of assembly, interacts with KIN10 and KIN11. In terms of processing, phosphorylated by KIN10. As to expression, expressed in leaves, stems, roots, siliques and flowers. Detected in vascular strands, stigma cells, the abscission zones of fully elongated siliques, the root central cylinder and the root tip.

It localises to the nucleus. The catalysed reaction is 1D-myo-inositol 1,4,5-trisphosphate + 2 ATP = 1D-myo-inositol 1,3,4,5,6-pentakisphosphate + 2 ADP + 2 H(+). It catalyses the reaction 1D-myo-inositol 1,3,4,6-tetrakisphosphate + ATP = 1D-myo-inositol 1,3,4,5,6-pentakisphosphate + ADP + H(+). Down-regulated by KIN10 through its protein phosphorylation. Inositol phosphate kinase with a broad substrate specificity. Phosphorylates inositol 1,4,5-trisphosphate (Ins(1,4,5)P3), inositol 1,4,5,6-tetrakisphosphate (Ins(1,4,5,6)P4), inositol 1,3,4,5-tetrakisphosphate (Ins(1,3,4,5)P4), inositol 1,3,4,6-tetrakisphosphate (Ins(1,3,4,6)P4) and inositol 1,2,3,4,6-pentakisphosphate (Ins(1,2,3,4,6)P5) but not inositol 1,4-bisphosphate (Ins(1,4)P2), inositol 1,3,4-trisphosphate (Ins(1,3,4)P3), inositol 1,2,6-trisphosphate (Ins(1,2,6)P3), inositol 3,4,5,6-tetrakisphosphate (Ins(3,4,5,6)P4), inositol 1,3,4,5,6-pentakisphosphate (Ins(1,3,4,5,6)P5), inositol 1,2,4,5,6-pentakisphosphate (Ins(1,2,4,5,6)P5) or inositol hexakisphosphate (InsP6). Involved in the auxin signaling pathway. Regulates axillary shoot branching and is required for phytate synthesis in seeds. In Arabidopsis thaliana (Mouse-ear cress), this protein is Inositol polyphosphate multikinase beta (IPK2b).